We begin with the raw amino-acid sequence, 646 residues long: Long-chain fatty acid transport protein 1 (646 aa).

The Extracellular segment spans residues Met1–Ser13. A helical transmembrane segment spans residues Leu14–Val34. Residues Tyr35–Leu646 are Cytoplasmic-facing. Residues Glu191–Lys475 form a sufficient for oligomerization region. Tyr246–Lys257 is an AMP binding site.

It belongs to the ATP-dependent AMP-binding enzyme family. As to quaternary structure, self-associates. May function as a homodimer. Interacts with EPRS1; mediates the translocation of SLC27A1 from the cytoplasm to the plasma membrane thereby increasing the uptake of long-chain fatty acids. Interacts with DGAT2 and this interaction is enhanced in the presence of ZFYVE1. In terms of tissue distribution, higher expression in white adipose tissue than in heart. Highest expression in skeletal muscle, heart and fat. Lower levels in brain, kidney, lung, liver and testis. No expression in spleen or intestine.

Its subcellular location is the cell membrane. The protein localises to the mitochondrion outer membrane. The protein resides in the endomembrane system. It is found in the cytoplasm. The enzyme catalyses a fatty acid(in) = a fatty acid(out). It catalyses the reaction (9Z)-octadecenoate(out) = (9Z)-octadecenoate(in). It carries out the reaction hexadecanoate(out) = hexadecanoate(in). The catalysed reaction is (5Z,8Z,11Z,14Z)-eicosatetraenoate(out) = (5Z,8Z,11Z,14Z)-eicosatetraenoate(in). The enzyme catalyses (9Z,12Z)-octadecadienoate(out) = (9Z,12Z)-octadecadienoate(in). It catalyses the reaction a long-chain fatty acid + ATP + CoA = a long-chain fatty acyl-CoA + AMP + diphosphate. It carries out the reaction (5Z,8Z,11Z,14Z)-eicosatetraenoate + ATP + CoA = (5Z,8Z,11Z,14Z)-eicosatetraenoyl-CoA + AMP + diphosphate. The catalysed reaction is a very long-chain fatty acid + ATP + CoA = a very long-chain fatty acyl-CoA + AMP + diphosphate. The enzyme catalyses tetracosanoate + ATP + CoA = tetracosanoyl-CoA + AMP + diphosphate. With respect to regulation, inhibited by Triacsin C. Both insulin and muscle contraction stimulate translocation to the plasma membrane in muscle, increasing fatty acid transport activity. In terms of biological role, mediates the import of long-chain fatty acids (LCFA) into the cell by facilitating their transport at the plasma membrane. Also functions as an acyl-CoA ligase catalyzing the ATP-dependent formation of fatty acyl-CoA using LCFA and very-long-chain fatty acids (VLCFA) as substrates, which prevents fatty acid efflux from cells and might drive more fatty acid uptake. May act directly as a bona fide transporter, or alternatively, in a cytoplasmic or membrane-associated multimeric protein complex to trap and draw fatty acids towards accumulation. Plays a pivotal role in regulating available LCFA substrates from exogenous sources in tissues undergoing high levels of beta-oxidation or triglyceride synthesis. May be involved in regulation of cholesterol metabolism. Probably involved in fatty acid transport across the blood barrier. The sequence is that of Long-chain fatty acid transport protein 1 from Mus musculus (Mouse).